Consider the following 261-residue polypeptide: Triosephosphate isomerase (261 aa).

Residue 10-12 coordinates substrate; it reads NWK. Residue histidine 100 is the Electrophile of the active site. The active-site Proton acceptor is glutamate 172. Residues glycine 178, serine 218, and 239-240 contribute to the substrate site; that span reads GG.

Belongs to the triosephosphate isomerase family. In terms of assembly, homodimer.

Its subcellular location is the cytoplasm. It carries out the reaction D-glyceraldehyde 3-phosphate = dihydroxyacetone phosphate. It participates in carbohydrate biosynthesis; gluconeogenesis. Its pathway is carbohydrate degradation; glycolysis; D-glyceraldehyde 3-phosphate from glycerone phosphate: step 1/1. Functionally, involved in the gluconeogenesis. Catalyzes stereospecifically the conversion of dihydroxyacetone phosphate (DHAP) to D-glyceraldehyde-3-phosphate (G3P). The protein is Triosephosphate isomerase of Mycobacteroides abscessus (strain ATCC 19977 / DSM 44196 / CCUG 20993 / CIP 104536 / JCM 13569 / NCTC 13031 / TMC 1543 / L948) (Mycobacterium abscessus).